The sequence spans 889 residues: DNA gyrase subunit A (889 aa).

Residues 35–501 (LPDVRDGLKP…GFEDLEDEDL (467 aa)) form the Topo IIA-type catalytic domain. The active-site O-(5'-phospho-DNA)-tyrosine intermediate is the tyrosine 123. The GyrA-box signature appears at 528-534 (QNRGGRG). Residues 811–889 (KEDAEDETNE…IQQSSDEDEE (79 aa)) form a disordered region. The span at 813–823 (DAEDETNEDEQ) shows a compositional bias: acidic residues. Residues 863 to 875 (DGRIEVRQDFMDR) show a composition bias toward basic and acidic residues. Positions 876–889 (VEEDIQQSSDEDEE) are enriched in acidic residues.

Belongs to the type II topoisomerase GyrA/ParC subunit family. As to quaternary structure, heterotetramer, composed of two GyrA and two GyrB chains. In the heterotetramer, GyrA contains the active site tyrosine that forms a transient covalent intermediate with DNA, while GyrB binds cofactors and catalyzes ATP hydrolysis.

It is found in the cytoplasm. The catalysed reaction is ATP-dependent breakage, passage and rejoining of double-stranded DNA.. Functionally, a type II topoisomerase that negatively supercoils closed circular double-stranded (ds) DNA in an ATP-dependent manner to modulate DNA topology and maintain chromosomes in an underwound state. Negative supercoiling favors strand separation, and DNA replication, transcription, recombination and repair, all of which involve strand separation. Also able to catalyze the interconversion of other topological isomers of dsDNA rings, including catenanes and knotted rings. Type II topoisomerases break and join 2 DNA strands simultaneously in an ATP-dependent manner. This chain is DNA gyrase subunit A, found in Staphylococcus aureus (strain Mu50 / ATCC 700699).